The primary structure comprises 320 residues: Methylenetetrahydrofolate dehydrogenase [NAD(+)] (320 aa).

C150 is an active-site residue. NAD(+) is bound by residues 185–186 (RS), 208–209 (DV), and 274–276 (FAC).

This sequence belongs to the tetrahydrofolate dehydrogenase/cyclohydrolase family. Homodimer. The N-terminus is blocked.

The protein resides in the cytoplasm. It localises to the nucleus. The enzyme catalyses (6R)-5,10-methylene-5,6,7,8-tetrahydrofolate + NAD(+) = (6R)-5,10-methenyltetrahydrofolate + NADH. Functionally, catalyzes oxidation of cytoplasmic one-carbon units for purine biosynthesis. The chain is Methylenetetrahydrofolate dehydrogenase [NAD(+)] (MTD1) from Saccharomyces cerevisiae (strain ATCC 204508 / S288c) (Baker's yeast).